Here is a 644-residue protein sequence, read N- to C-terminus: Cell pattern formation-associated protein StuA (644 aa).

The span at 18 to 33 shows a compositional bias: low complexity; the sequence is ATAHAPASAAPSGISH. 2 disordered regions span residues 18 to 58 and 86 to 120; these read ATAH…PGYP and QLPA…APPG. Over residues 38–47 the composition is skewed to polar residues; the sequence is PQSSMMQPGQ. Residues 87-104 show a composition bias toward low complexity; that stretch reads LPAMSSSGPSPSLSGAQS. The 107-residue stretch at 124–230 folds into the HTH APSES-type domain; it reads RVTATLWEDE…HDIGALLYHP (107 aa). The segment at residues 158–179 is a DNA-binding region (H-T-H motif); sequence GTKLLNVAGMTRGRRDGILKSE. Positions 239-644 are disordered; that stretch reads GSAAMAAVDR…HTMTAQRARR (406 aa). Positions 253 to 269 are enriched in polar residues; sequence SMQTQRYISGPTTSQPP. Over residues 315–328 the composition is skewed to low complexity; the sequence is SASSIMGMSNSGSS. Composition is skewed to polar residues over residues 334–357, 371–383, and 395–404; these read ANVQ…TRSV, QAIS…SYDN, and PGQYNTQGQS. The segment covering 456 to 465 has biased composition (basic and acidic residues); the sequence is EGDHEHDNEY. Low complexity predominate over residues 509–524; it reads GSGRATPRTTTTSQTQ. Residues 525 to 544 are compositionally biased toward polar residues; it reads WNSGYPTPQRQGPPSSNLYN. A nuclear localization domain region spans residues 584-612; it reads KRGRDDDDEDPYRPDSVQSDDMGGLKRRK. Over residues 635–644 the composition is skewed to polar residues; sequence HTMTAQRARR.

It belongs to the EFG1/PHD1/stuA family.

It localises to the nucleus. Its function is as follows. Transcription factor that regulates asexual reproduction. Binds the StuA-response elements (StRE) with the consensus sequence 5'-(A/T)CGCG(T/A)N(A/C)-3' at the promoters of target genes. Required for pathogenicity and positively regulates the synthesis of the mycotoxin alternariol. Acts as a positive regulator of Tox3 but is not required for the expression of ToxA. Also acts as a central regulator of carbon metabolism including glycolysis, the TCA cycle, and amino acid synthesis. This Phaeosphaeria nodorum (strain SN15 / ATCC MYA-4574 / FGSC 10173) (Glume blotch fungus) protein is Cell pattern formation-associated protein StuA.